We begin with the raw amino-acid sequence, 81 residues long: Large ribosomal subunit protein uL23 (81 aa).

The protein belongs to the universal ribosomal protein uL23 family. Part of the 50S ribosomal subunit. Contacts protein L29.

Binds to 23S rRNA. One of the proteins that surrounds the polypeptide exit tunnel on the outside of the ribosome. This is Large ribosomal subunit protein uL23 from Saccharolobus solfataricus (strain ATCC 35092 / DSM 1617 / JCM 11322 / P2) (Sulfolobus solfataricus).